A 493-amino-acid chain; its full sequence is Proline--tRNA ligase (493 aa).

This sequence belongs to the class-II aminoacyl-tRNA synthetase family. ProS type 3 subfamily. Homodimer.

Its subcellular location is the cytoplasm. It catalyses the reaction tRNA(Pro) + L-proline + ATP = L-prolyl-tRNA(Pro) + AMP + diphosphate. Catalyzes the attachment of proline to tRNA(Pro) in a two-step reaction: proline is first activated by ATP to form Pro-AMP and then transferred to the acceptor end of tRNA(Pro). The polypeptide is Proline--tRNA ligase (Parabacteroides distasonis (strain ATCC 8503 / DSM 20701 / CIP 104284 / JCM 5825 / NCTC 11152)).